The primary structure comprises 347 residues: NADH-ubiquinone oxidoreductase chain 2 (347 aa).

Transmembrane regions (helical) follow at residues 2–22 (SPYV…MTLI), 25–45 (HWLT…PLMT), 56–76 (AIKY…SAIF), 96–116 (FMMT…FWVP), 122–142 (IPLL…ISIF), 149–169 (LNMS…GWGG), 178–197 (ILAY…IMIY), 202–219 (ILNL…FMVL), 241–261 (MIII…TGFM), 278–298 (LAMM…RIIY), and 323–343 (ILPI…TPMF).

It belongs to the complex I subunit 2 family. As to quaternary structure, core subunit of respiratory chain NADH dehydrogenase (Complex I) which is composed of 45 different subunits. Interacts with TMEM242.

The protein localises to the mitochondrion inner membrane. The catalysed reaction is a ubiquinone + NADH + 5 H(+)(in) = a ubiquinol + NAD(+) + 4 H(+)(out). In terms of biological role, core subunit of the mitochondrial membrane respiratory chain NADH dehydrogenase (Complex I) which catalyzes electron transfer from NADH through the respiratory chain, using ubiquinone as an electron acceptor. Essential for the catalytic activity and assembly of complex I. This Metachirus nudicaudatus (Brown four-eyed opossum) protein is NADH-ubiquinone oxidoreductase chain 2.